A 264-amino-acid polypeptide reads, in one-letter code: MSAIHLPDTQNSADTRQIIIDKVGIKDITHPITYIDCDGNKIPTIGIFTMTVSLSERVKGTHMSRFIEILNEGPCEFSAHNFDKIIDKVRKRLESDIAHITLNFTFFRRKKAPSSGVESMMDYQVTLYGTLNKDEVQVMMKVVVPVTSLCPCSKSISKYGAHNQRSHITIKAKAAKDKTLHIEDLIDLAERKASCELYAILKRDDEKVVTERAYDNPAFVEDLVRDIAVDLNADDKISYYRLESENFESIHNHSAYALIENQKC.

Belongs to the GTP cyclohydrolase IV family.

The catalysed reaction is GTP + H2O = 7,8-dihydroneopterin 3'-triphosphate + formate + H(+). Its pathway is cofactor biosynthesis; 7,8-dihydroneopterin triphosphate biosynthesis; 7,8-dihydroneopterin triphosphate from GTP: step 1/1. In terms of biological role, converts GTP to 7,8-dihydroneopterin triphosphate. The sequence is that of GTP cyclohydrolase FolE2 from Ruthia magnifica subsp. Calyptogena magnifica.